Consider the following 624-residue polypeptide: Vitamin B12 transporter BtuB (624 aa).

The N-terminal stretch at 1–21 is a signal peptide; sequence MTIKKYTLLTALSVTAFSGWA. A TonB box motif is present at residues 31 to 38; the sequence is NEMVVTAN. A TBDR plug domain is found at 43–157; sequence PKSSVLAPVD…IGGVVNIITE (115 aa). Residues leucine 88, serine 90, asparagine 97, and 115 to 116 contribute to the cyanocob(III)alamin site; that span reads IS. Positions 160–624 constitute a TBDR beta-barrel domain; that stretch reads TLGSTLTAGL…EYYFTGSYNF (465 aa). A run of 3 beta stranded transmembrane segments spans residues 163 to 170, 174 to 183, and 189 to 200; these read STLTAGLG, YQNYNGSTQQ, and TTITLAGNYDYS. Ca(2+) is bound by residues aspartate 204, glutamine 216, aspartate 218, and aspartate 220. A run of 2 beta stranded transmembrane segments spans residues 222 to 232 and 237 to 253; these read YLGKMLWLGAN and EQFS…NRSD. Tyrosine 254, aspartate 255, and aspartate 266 together coordinate Ca(2+). The next 17 membrane-spanning stretches (beta stranded) occupy residues 268–282, 284–301, 314–330, 333–342, 358–374, 376–386, 390–405, 408–422, 440–449, 455–464, 481–498, 502–517, 525–537, 543–557, 568–582, 595–606, and 612–624; these read RSLS…INFS, GGYA…QDYN, TLDD…NTYQ, LGNVGGGLDW, YEQR…QFVG, VTLEGAIRGDD, FGWH…WEFV, YRLI…KAPN, ESTQWEAAIT, LDWRLSAYRN, YYNV…TGSF, PLSH…PRNA, RRAK…QLDW, DWSV…RYDS, PVKL…LAVS, IANLFDKDYEMV, and PGRE…SYNF. Cyanocob(III)alamin is bound at residue threonine 314. Cyanocob(III)alamin is bound at residue arginine 525. A TonB C-terminal box motif is present at residues 607–624; sequence YGYQTPGREYYFTGSYNF.

This sequence belongs to the TonB-dependent receptor family. BtuB (TC 1.B.14.3.1) subfamily.

It localises to the cell outer membrane. Its function is as follows. Involved in the active translocation of vitamin B12 (cyanocobalamin) across the outer membrane to the periplasmic space. It derives its energy for transport by interacting with the trans-periplasmic membrane protein TonB. This Yersinia pseudotuberculosis serotype O:1b (strain IP 31758) protein is Vitamin B12 transporter BtuB.